The primary structure comprises 332 residues: MKVAVLGAGAWGTALAGHLAARHDTVLWARDATLISELSTSHENARYLAGVALPSTLRFQANLELALNHALDDAALCVVATPVAGLRAMLRTMRDMRKVPSHIVWLCKGFEADSQLMPHQVVAQELSGHTSNGPLSGPSFAREVGQGLPVALTVASASAACRERTVAAFHHGAMRIYSGDDVVGVEVGGAVKNVLAIATGIADGLGLGLNARAALITRGLAEMSRLGAALGGRAETFTGLTGLGDLILTATGDLSRNRTVGMQLASGRSLDDILNALGHVAEGVRCARSVLSLAQSHAIDMPITQAVCDVLFNGVAPRDAVSALLRRDAKPE.

NADPH contacts are provided by Trp-11, Arg-30, and Lys-108. 3 residues coordinate sn-glycerol 3-phosphate: Lys-108, Gly-137, and Ser-139. Ala-141 contacts NADPH. Sn-glycerol 3-phosphate contacts are provided by Lys-192, Asp-245, Ser-255, Arg-256, and Asn-257. Lys-192 acts as the Proton acceptor in catalysis. Position 256 (Arg-256) interacts with NADPH. NADPH is bound by residues Val-280 and Glu-282.

It belongs to the NAD-dependent glycerol-3-phosphate dehydrogenase family.

The protein localises to the cytoplasm. The catalysed reaction is sn-glycerol 3-phosphate + NAD(+) = dihydroxyacetone phosphate + NADH + H(+). It carries out the reaction sn-glycerol 3-phosphate + NADP(+) = dihydroxyacetone phosphate + NADPH + H(+). The protein operates within membrane lipid metabolism; glycerophospholipid metabolism. Functionally, catalyzes the reduction of the glycolytic intermediate dihydroxyacetone phosphate (DHAP) to sn-glycerol 3-phosphate (G3P), the key precursor for phospholipid synthesis. The chain is Glycerol-3-phosphate dehydrogenase [NAD(P)+] from Paraburkholderia phymatum (strain DSM 17167 / CIP 108236 / LMG 21445 / STM815) (Burkholderia phymatum).